A 134-amino-acid polypeptide reads, in one-letter code: uncharacterized protein (134 aa).

3 helical membrane-spanning segments follow: residues valine 26–glycine 46, leucine 55–valine 75, and tyrosine 101–leucine 121.

It localises to the membrane. This is an uncharacterized protein from Dictyostelium discoideum (Social amoeba).